The primary structure comprises 216 residues: Ribose-5-phosphate isomerase A (216 aa).

Residues 26–29, 79–82, and 92–95 each bind substrate; these read TGST, DGAD, and KGGG. The active-site Proton acceptor is Glu-101. Residue Lys-119 coordinates substrate.

Belongs to the ribose 5-phosphate isomerase family. In terms of assembly, homodimer.

The catalysed reaction is aldehydo-D-ribose 5-phosphate = D-ribulose 5-phosphate. It functions in the pathway carbohydrate degradation; pentose phosphate pathway; D-ribose 5-phosphate from D-ribulose 5-phosphate (non-oxidative stage): step 1/1. Its function is as follows. Catalyzes the reversible conversion of ribose-5-phosphate to ribulose 5-phosphate. In Legionella pneumophila (strain Lens), this protein is Ribose-5-phosphate isomerase A.